Consider the following 102-residue polypeptide: Integration host factor subunit alpha (102 aa).

The protein belongs to the bacterial histone-like protein family. As to quaternary structure, heterodimer of an alpha and a beta chain.

Its function is as follows. This protein is one of the two subunits of integration host factor, a specific DNA-binding protein that functions in genetic recombination as well as in transcriptional and translational control. The chain is Integration host factor subunit alpha from Paracoccus denitrificans (strain Pd 1222).